The chain runs to 99 residues: Small ribosomal subunit protein bS21 (99 aa).

A disordered region spans residues 60 to 99 (KKLQREGLLPMKPKPVFGAGPGGDRRGPGAGPGAGPRPAR).

This sequence belongs to the bacterial ribosomal protein bS21 family.

The chain is Small ribosomal subunit protein bS21 from Rhodopseudomonas palustris (strain BisA53).